The following is a 728-amino-acid chain: FYN-binding protein 2 (728 aa).

Disordered regions lie at residues 17-76, 250-287, and 367-390; these read QNLD…PLQP, QAPE…RPPI, and PGKN…EKQP. Residues 42-75 show a composition bias toward polar residues; it reads GTQSTQILANGKPLSSNHKQRTPYCSSSESQPLQ. Positions 276–285 are enriched in pro residues; the sequence is GPPPPKPSRP. A compositionally biased stretch (basic and acidic residues) spans 377–390; the sequence is SAKHEDKKMKEKQP. The residue at position 491 (Tyr-491) is a Phosphotyrosine. An SH2-binding; to LCP2 motif is present at residues 521-524; that stretch reads YEDV. Phosphotyrosine is present on Tyr-587. An SH3 domain is found at 664–724; it reads IVINTAVACS…LIEHLDFKHQ (61 aa).

In terms of assembly, interacts with SKAP1, LCK and FYN. The phosphorylated form interacts with LCP2. Post-translationally, phosphorylation is required for its function in T-cell activation. As to expression, expressed in T-cells (at protein level). Widely expressed.

It localises to the membrane raft. Functionally, adapter protein that plays a role in T-cell receptor (TCR)-mediated activation of signaling pathways. Required for T-cell activation and integrin-mediated T-cell adhesion in response to TCR stimulation. This is FYN-binding protein 2 from Homo sapiens (Human).